Here is a 566-residue protein sequence, read N- to C-terminus: Probable cytochrome P450 519D1 (566 aa).

The helical transmembrane segment at 1-21 (MNVFVLTFFICIIYLLFDLIK) threads the bilayer. The segment at 471 to 491 (FNNNNNNNNNNNNNNSNNKHK) is disordered. Residues 472–487 (NNNNNNNNNNNNNNSN) show a composition bias toward low complexity. C510 contacts heme.

This sequence belongs to the cytochrome P450 family. It depends on heme as a cofactor.

The protein localises to the membrane. In Dictyostelium discoideum (Social amoeba), this protein is Probable cytochrome P450 519D1 (cyp519D1).